A 345-amino-acid chain; its full sequence is 3-isopropylmalate dehydrogenase (345 aa).

74 to 87 (GPKWDGLPRKISPE) is an NAD(+) binding site. Residues Arg94, Arg104, Arg132, and Asp217 each coordinate substrate. Mg(2+)-binding residues include Asp217, Asp241, and Asp245. Position 274 to 286 (274 to 286 (GSAPDIAGKGIAN)) interacts with NAD(+).

The protein belongs to the isocitrate and isopropylmalate dehydrogenases family. LeuB type 1 subfamily. As to quaternary structure, homodimer. Mg(2+) serves as cofactor. Requires Mn(2+) as cofactor.

The protein localises to the cytoplasm. It catalyses the reaction (2R,3S)-3-isopropylmalate + NAD(+) = 4-methyl-2-oxopentanoate + CO2 + NADH. The protein operates within amino-acid biosynthesis; L-leucine biosynthesis; L-leucine from 3-methyl-2-oxobutanoate: step 3/4. Catalyzes the oxidation of 3-carboxy-2-hydroxy-4-methylpentanoate (3-isopropylmalate) to 3-carboxy-4-methyl-2-oxopentanoate. The product decarboxylates to 4-methyl-2 oxopentanoate. The chain is 3-isopropylmalate dehydrogenase (leuB) from Thermus thermophilus.